The chain runs to 196 residues: Holliday junction branch migration complex subunit RuvA (196 aa).

A domain I region spans residues 1-63 (MIASVRGEVL…EDSMTLYGFP (63 aa)). The domain II stretch occupies residues 64–138 (DGETRDLFLT…DKVGVAATGG (75 aa)). Residues 138–142 (GALST) are flexible linker. Positions 143 to 196 (NGHAVRSPVVEALVGLGFAAKQAEEATDTVLAANHDATTSSALRSALSLLGKAR) are domain III.

Belongs to the RuvA family. Homotetramer. Forms an RuvA(8)-RuvB(12)-Holliday junction (HJ) complex. HJ DNA is sandwiched between 2 RuvA tetramers; dsDNA enters through RuvA and exits via RuvB. An RuvB hexamer assembles on each DNA strand where it exits the tetramer. Each RuvB hexamer is contacted by two RuvA subunits (via domain III) on 2 adjacent RuvB subunits; this complex drives branch migration. In the full resolvosome a probable DNA-RuvA(4)-RuvB(12)-RuvC(2) complex forms which resolves the HJ.

It localises to the cytoplasm. Its function is as follows. The RuvA-RuvB-RuvC complex processes Holliday junction (HJ) DNA during genetic recombination and DNA repair, while the RuvA-RuvB complex plays an important role in the rescue of blocked DNA replication forks via replication fork reversal (RFR). RuvA specifically binds to HJ cruciform DNA, conferring on it an open structure. The RuvB hexamer acts as an ATP-dependent pump, pulling dsDNA into and through the RuvAB complex. HJ branch migration allows RuvC to scan DNA until it finds its consensus sequence, where it cleaves and resolves the cruciform DNA. The protein is Holliday junction branch migration complex subunit RuvA of Mycobacterium bovis (strain ATCC BAA-935 / AF2122/97).